Consider the following 713-residue polypeptide: Probable arginine--tRNA ligase, cytoplasmic (713 aa).

The tract at residues 74-113 (KNKKNGVKATSTSSPSSSTSAPAEKKAKKDGKTGGAPPKQ) is disordered. Low complexity predominate over residues 81–95 (KATSTSSPSSSTSAP). The segment covering 96–105 (AEKKAKKDGK) has biased composition (basic and acidic residues). L-arginine-binding positions include 252–254 (SPN), His-263, Tyr-438, Asp-442, and Gln-466. The 'HIGH' region motif lies at 252–263 (SPNIAKEMHVGH). Positions 583 to 597 (NTAVYLLYAYTRIQS) are interaction with tRNA.

This sequence belongs to the class-I aminoacyl-tRNA synthetase family.

Its subcellular location is the cytoplasm. It is found in the cytosol. The enzyme catalyses tRNA(Arg) + L-arginine + ATP = L-arginyl-tRNA(Arg) + AMP + diphosphate. Forms part of a macromolecular complex that catalyzes the attachment of specific amino acids to cognate tRNAs during protein synthesis. The polypeptide is Probable arginine--tRNA ligase, cytoplasmic (Caenorhabditis elegans).